The sequence spans 65 residues: Weak toxin CM-13b (65 aa).

5 cysteine pairs are disulfide-bonded: Cys-3-Cys-24, Cys-6-Cys-11, Cys-17-Cys-42, Cys-46-Cys-57, and Cys-58-Cys-63.

It belongs to the three-finger toxin family. Ancestral subfamily. Orphan group II sub-subfamily. In terms of tissue distribution, expressed by the venom gland.

The protein localises to the secreted. Binds with low affinity to muscular (alpha-1-beta-1-delta-epsilon/CHRNA1-CHRNB1-CHRND-CHRNE) and very low affinity to neuronal (alpha-7/CHRNA7) nicotinic acetylcholine receptor (nAChR). The protein is Weak toxin CM-13b of Naja annulifera (Banded Egyptian cobra).